A 214-amino-acid polypeptide reads, in one-letter code: Thiamine-phosphate synthase (214 aa).

4-amino-2-methyl-5-(diphosphooxymethyl)pyrimidine contacts are provided by residues 37-41 and N73; that span reads QYREK. Mg(2+) is bound by residues D74 and D93. S112 is a binding site for 4-amino-2-methyl-5-(diphosphooxymethyl)pyrimidine. 139–141 serves as a coordination point for 2-[(2R,5Z)-2-carboxy-4-methylthiazol-5(2H)-ylidene]ethyl phosphate; it reads TIS. K142 contacts 4-amino-2-methyl-5-(diphosphooxymethyl)pyrimidine. 2-[(2R,5Z)-2-carboxy-4-methylthiazol-5(2H)-ylidene]ethyl phosphate-binding positions include G171 and 191-192; that span reads IS.

This sequence belongs to the thiamine-phosphate synthase family. It depends on Mg(2+) as a cofactor.

It catalyses the reaction 2-[(2R,5Z)-2-carboxy-4-methylthiazol-5(2H)-ylidene]ethyl phosphate + 4-amino-2-methyl-5-(diphosphooxymethyl)pyrimidine + 2 H(+) = thiamine phosphate + CO2 + diphosphate. The catalysed reaction is 2-(2-carboxy-4-methylthiazol-5-yl)ethyl phosphate + 4-amino-2-methyl-5-(diphosphooxymethyl)pyrimidine + 2 H(+) = thiamine phosphate + CO2 + diphosphate. The enzyme catalyses 4-methyl-5-(2-phosphooxyethyl)-thiazole + 4-amino-2-methyl-5-(diphosphooxymethyl)pyrimidine + H(+) = thiamine phosphate + diphosphate. It participates in cofactor biosynthesis; thiamine diphosphate biosynthesis; thiamine phosphate from 4-amino-2-methyl-5-diphosphomethylpyrimidine and 4-methyl-5-(2-phosphoethyl)-thiazole: step 1/1. In terms of biological role, condenses 4-methyl-5-(beta-hydroxyethyl)thiazole monophosphate (THZ-P) and 2-methyl-4-amino-5-hydroxymethyl pyrimidine pyrophosphate (HMP-PP) to form thiamine monophosphate (TMP). The polypeptide is Thiamine-phosphate synthase (Listeria monocytogenes serotype 4a (strain HCC23)).